A 151-amino-acid polypeptide reads, in one-letter code: Transcription elongation factor GreA (151 aa).

A coiled-coil region spans residues 41–62 (AEYHAAREKQSFIEGRIKELEA).

This sequence belongs to the GreA/GreB family.

Necessary for efficient RNA polymerase transcription elongation past template-encoded arresting sites. The arresting sites in DNA have the property of trapping a certain fraction of elongating RNA polymerases that pass through, resulting in locked ternary complexes. Cleavage of the nascent transcript by cleavage factors such as GreA or GreB allows the resumption of elongation from the new 3'terminus. GreA releases sequences of 2 to 3 nucleotides. The protein is Transcription elongation factor GreA of Cereibacter sphaeroides (strain ATCC 17023 / DSM 158 / JCM 6121 / CCUG 31486 / LMG 2827 / NBRC 12203 / NCIMB 8253 / ATH 2.4.1.) (Rhodobacter sphaeroides).